The following is a 127-amino-acid chain: uncharacterized protein (127 aa).

2 helical membrane passes run 42–62 (LLIS…IAFI) and 78–98 (GLPI…YYFL).

The protein localises to the membrane. This is an uncharacterized protein from Schizosaccharomyces pombe (strain 972 / ATCC 24843) (Fission yeast).